Here is a 438-residue protein sequence, read N- to C-terminus: Xylose isomerase (438 aa).

Residues Asp306 and Asp308 each coordinate Mg(2+).

Belongs to the xylose isomerase family. As to quaternary structure, homotetramer. Mg(2+) serves as cofactor.

It is found in the cytoplasm. The catalysed reaction is alpha-D-xylose = alpha-D-xylulofuranose. The polypeptide is Xylose isomerase (Caldicellulosiruptor bescii (strain ATCC BAA-1888 / DSM 6725 / KCTC 15123 / Z-1320) (Anaerocellum thermophilum)).